The primary structure comprises 169 residues: MALLNILQYPDPRLHKVAKPVAVVDDRIRKLVADMAETMYDAPGIGLAATQVDVHERVITIDVSESRDELRVFINPEIVWASEARKVWDEGCLSVPDIYDKVERPDRVRVRALNEKGESFELETDGLLAVCIQHEMDHLMGKVFVEYLSPLKQNRIKIKLKKHQLERAR.

Residues Cys92 and His134 each contribute to the Fe cation site. The active site involves Glu135. Residue His138 participates in Fe cation binding.

The protein belongs to the polypeptide deformylase family. Fe(2+) serves as cofactor.

The enzyme catalyses N-terminal N-formyl-L-methionyl-[peptide] + H2O = N-terminal L-methionyl-[peptide] + formate. Removes the formyl group from the N-terminal Met of newly synthesized proteins. Requires at least a dipeptide for an efficient rate of reaction. N-terminal L-methionine is a prerequisite for activity but the enzyme has broad specificity at other positions. In Ralstonia nicotianae (strain ATCC BAA-1114 / GMI1000) (Ralstonia solanacearum), this protein is Peptide deformylase 1.